Here is a 160-residue protein sequence, read N- to C-terminus: SsrA-binding protein (160 aa).

Residues 133–160 are disordered; sequence GKKLHDKRDTEKERDWKREQQRLLRDRG. Over residues 138 to 160 the composition is skewed to basic and acidic residues; it reads DKRDTEKERDWKREQQRLLRDRG.

The protein belongs to the SmpB family.

The protein localises to the cytoplasm. Functionally, required for rescue of stalled ribosomes mediated by trans-translation. Binds to transfer-messenger RNA (tmRNA), required for stable association of tmRNA with ribosomes. tmRNA and SmpB together mimic tRNA shape, replacing the anticodon stem-loop with SmpB. tmRNA is encoded by the ssrA gene; the 2 termini fold to resemble tRNA(Ala) and it encodes a 'tag peptide', a short internal open reading frame. During trans-translation Ala-aminoacylated tmRNA acts like a tRNA, entering the A-site of stalled ribosomes, displacing the stalled mRNA. The ribosome then switches to translate the ORF on the tmRNA; the nascent peptide is terminated with the 'tag peptide' encoded by the tmRNA and targeted for degradation. The ribosome is freed to recommence translation, which seems to be the essential function of trans-translation. In Rhizorhabdus wittichii (strain DSM 6014 / CCUG 31198 / JCM 15750 / NBRC 105917 / EY 4224 / RW1) (Sphingomonas wittichii), this protein is SsrA-binding protein.